The sequence spans 547 residues: Cytochrome P450 monooxygenase 128 (547 aa).

The helical transmembrane segment at 9–25 (IPWAAGATLLAWAAYKI) threads the bilayer. Residues Asn-336 and Asn-438 are each glycosylated (N-linked (GlcNAc...) asparagine). Heme is bound at residue Cys-483.

It belongs to the cytochrome P450 family. It depends on heme as a cofactor.

The protein resides in the membrane. It participates in secondary metabolite biosynthesis. Functionally, cytochrome P450 monooxygenase that is able to use 7-ethoxycoumarin and testosterone as substrates for oxidation. The polypeptide is Cytochrome P450 monooxygenase 128 (Postia placenta (strain ATCC 44394 / Madison 698-R) (Brown rot fungus)).